We begin with the raw amino-acid sequence, 453 residues long: tRNA hydroxylation protein P (453 aa).

It belongs to the peptidase U32 family.

Its function is as follows. Involved in prephenate-dependent formation of 5-hydroxyuridine (ho5U) modification at position 34 in tRNAs, the first step in 5-carboxymethoxyuridine (cmo5U) biosynthesis. Involved differently in ho5U formation in each tRNA; tRNA(Leu3) and tRNA(Pro3) are major targets of TrhP. The sequence is that of tRNA hydroxylation protein P from Escherichia coli (strain K12).